The primary structure comprises 329 residues: GDP-mannose transporter (329 aa).

At 1–11 (MADKGSVAAKS) the chain is on the cytoplasmic side. Residues 12 to 32 (LTNSAPLSIFSYCAASILMTV) traverse the membrane as a helical segment. Over 33 to 40 (TNKYAVSG) the chain is Lumenal. Residues 41 to 61 (VDFNFNFFLLAVQGIVCITLI) form a helical membrane-spanning segment. Topologically, residues 62 to 83 (SSLKQLNVITFREFNKVEAKKW) are cytoplasmic. The helical transmembrane segment at 84–104 (FPIAVLLVVMIYTSSKALQYL) threads the bilayer. Residues 105–107 (SIP) are Lumenal-facing. Residues 108 to 128 (IYTIFKNLTIILIAYGEVIWF) traverse the membrane as a helical segment. Over 129–131 (GGR) the chain is Cytoplasmic. A helical membrane pass occupies residues 132 to 152 (VTNLALGSFVLMVLSSAVASY). The Lumenal segment spans residues 153-163 (GDSNVDTGKLN). The chain crosses the membrane as a helical span at residues 164–184 (FNIGYFWMFTNCFSSAAFVLF). At 185–196 (MRKRIKLTNFKD) the chain is on the cytoplasmic side. The helical transmembrane segment at 197 to 217 (FDTMYYNNLLSIPILLFASLT) threads the bilayer. Topologically, residues 218 to 237 (TEDWSAKNIAQNFPEDTKYA) are lumenal. A helical transmembrane segment spans residues 238–258 (VIASMIISGMSAVGISYTSAW). The Cytoplasmic portion of the chain corresponds to 259-266 (CVRVTSST). The chain crosses the membrane as a helical span at residues 267 to 287 (TYSMVGALNKLPIALSGLLFF). Topologically, residues 288–290 (KAP) are lumenal. The helical transmembrane segment at 291–311 (INFYSISSIFIGFAAGLVYAI) threads the bilayer. Topologically, residues 312 to 329 (AKQKQKKEDELQLPTDKS) are cytoplasmic.

Belongs to the TPT transporter family. SLC35D subfamily. In terms of assembly, homooligomer.

It is found in the golgi apparatus membrane. Its subcellular location is the cytoplasmic vesicle membrane. The protein resides in the endoplasmic reticulum membrane. In terms of biological role, involved in the import of GDP-mannose from the cytoplasm into the Golgi lumen. In Komagataella pastoris (Yeast), this protein is GDP-mannose transporter (VIG4).